Here is a 167-residue protein sequence, read N- to C-terminus: Epithelial membrane protein 2 (167 aa).

Residues Met1–Ile21 traverse the membrane as a helical segment. Residues Asn44, Asn47, and Asn52 are each glycosylated (N-linked (GlcNAc...) asparagine). Helical transmembrane passes span Thr67–Phe87, Phe95–Ile115, and Tyr143–Leu163.

Belongs to the PMP-22/EMP/MP20 family. Interacts with PTK2; regulates PTK2 activation and localization. Interacts with ITGB3; regulates the levels of the heterodimer ITGA5-ITGB3 integrin surface expression. Interacts with P2RX7 (via C-terminus). Interacts with ITGB1; the interaction may be direct or indirect and ITGB1 has a heterodimer form. As to expression, expressed in ciliary body epithelia, sclera, cornea, and retinal pigment epithelium (at protein level). Expressed in lung and endometrial tissue; expression is particularly abundant in secretory endometrium (at protein level). Expressed in placental villous syncytiotrophoblasts and cytotrophoblasts and on the membrane of interstitial trophoblasts (at protein level).

It is found in the golgi apparatus membrane. It localises to the cell membrane. The protein resides in the apical cell membrane. Its subcellular location is the membrane raft. The protein localises to the cytoplasm. It is found in the nucleus. It localises to the perinuclear region. In terms of biological role, functions as a key regulator of cell membrane composition by regulating protein surface expression. Also, plays a role in regulation of processes including cell migration, cell proliferation, cell contraction and cell adhesion. Regulates transepithelial migration of neutrophils into the alveolar lumen, potentially via mediation of cell surface expression of adhesion markers and lipid raft formation. Negatively regulates caveolae formation by reducing CAV1 expression and CAV1 amount by increasing lysosomal degradation. Facilitates surface trafficking and formation of lipid rafts bearing GPI-anchor proteins. Regulates surface expression of MHC1 and ICAM1 proteins increasing susceptibility to T-cell mediated cytotoxicity. Regulates the plasma membrane expression of the integrin heterodimers ITGA6-ITGB1, ITGA5-ITGB3 and ITGA5-ITGB1 resulting in modulation of cell-matrix adhesion. Also regulates many processes through PTK2. Regulates blood vessel endothelial cell migration and angiogenesis by regulating VEGF protein expression through PTK2 activation. Regulates cell migration and cell contraction through PTK2 and SRC activation. Regulates focal adhesion density, F-actin conformation and cell adhesion capacity through interaction with PTK2. Positively regulates cell proliferation. Plays a role during cell death and cell blebbing. Promotes angiogenesis and vasculogenesis through induction of VEGFA via a HIF1A-dependent pathway. Also plays a role in embryo implantation by regulating surface trafficking of integrin heterodimer ITGA5-ITGB3. Plays a role in placental angiogenesis and uterine natural killer cell regulation at the maternal-fetal placental interface, however not required in the maternal tissues for a viable pregnancy. Involved in the early stages of embryogenic development and cardiogenesis, potentially via regulation of epithelial-mesenchymal transition timing. May play a role in glomerular filtration. This is Epithelial membrane protein 2 (EMP2) from Homo sapiens (Human).